The primary structure comprises 317 residues: Protease 7 (317 aa).

Positions 1 to 20 (MRAKLLGIVLTTPIAISSFA) are cleaved as a signal peptide. Topologically, residues 21 to 31 (STETLSFTPDN) are periplasmic. The chain crosses the membrane as a beta stranded span at residues 32 to 41 (INADISLGTL). Topologically, residues 42 to 69 (SGKTKERVYLAEEGGRKVSQLDWKFNNA) are extracellular. Residues 70 to 78 (AIIKGAINW) traverse the membrane as a beta stranded segment. The Periplasmic segment spans residues 79-83 (DLMPQ). The chain crosses the membrane as a beta stranded span at residues 84-92 (ISIGAAGWT). The Extracellular segment spans residues 93–130 (TLGSRGGNMVDQDWMDSSNPGTWTDESRHPDTQLNYAN). Active-site residues include aspartate 103 and aspartate 105. The beta stranded transmembrane segment at 131–140 (EFDLNIKGWL) threads the bilayer. The Periplasmic segment spans residues 141–145 (LNEPN). A beta stranded membrane pass occupies residues 146-156 (YRLGLMAGYQE). At 157 to 197 (SRYSFTARGGSYIYSSEEGFRDDIGSFPNGERAIGYKQRFK) the chain is on the extracellular side. Residues 198–209 (MPYIGLTGSYRY) form a beta stranded membrane-spanning segment. Residues 210–211 (ED) are Periplasmic-facing. A beta stranded membrane pass occupies residues 212-221 (FELGGTFKYS). Residues 222-250 (GWVESSDNDEHYDPGKRITYRSKVKDQNY) are Extracellular-facing. Active-site residues include aspartate 230 and histidine 232. The chain crosses the membrane as a beta stranded span at residues 251-261 (YSVAVNAGYYV). Residues 262 to 264 (TPN) are Periplasmic-facing. Residues 265-274 (AKVYVEGAWN) form a beta stranded membrane-spanning segment. Over 275-306 (RVTNKKGNTSLYDHNNNTSDYSKNGAGIENYN) the chain is Extracellular. A beta stranded membrane pass occupies residues 307 to 316 (FITTAGLKYT). Residue phenylalanine 317 is a topological domain, periplasmic.

Belongs to the peptidase A26 family. Homopentamer.

The protein localises to the cell outer membrane. The enzyme catalyses Has a virtual requirement for Arg in the P1 position and a slightly less stringent preference for this residue in the P1' position, which can also contain Lys, Gly or Val.. With respect to regulation, inhibited by zinc. Protease that can cleave T7 RNA polymerase, ferric enterobactin receptor protein (FEP), antimicrobial peptide protamine and other proteins. This protease has a specificity for paired basic residues. This Escherichia coli (strain K12) protein is Protease 7 (ompT).